The chain runs to 188 residues: Probable RNA 2'-phosphotransferase (188 aa).

This sequence belongs to the KptA/TPT1 family.

In terms of biological role, removes the 2'-phosphate from RNA via an intermediate in which the phosphate is ADP-ribosylated by NAD followed by a presumed transesterification to release the RNA and generate ADP-ribose 1''-2''-cyclic phosphate (APPR&gt;P). May function as an ADP-ribosylase. The chain is Probable RNA 2'-phosphotransferase from Lacticaseibacillus paracasei (strain ATCC 334 / BCRC 17002 / CCUG 31169 / CIP 107868 / KCTC 3260 / NRRL B-441) (Lactobacillus paracasei).